Here is a 441-residue protein sequence, read N- to C-terminus: Ribosomal protein uS12 methylthiotransferase RimO (441 aa).

The 111-residue stretch at 8–118 folds into the MTTase N-terminal domain; that stretch reads PKIGFVSLGC…VLQHVHHYVP (111 aa). The [4Fe-4S] cluster site is built by Cys-17, Cys-53, Cys-82, Cys-150, Cys-154, and Cys-157. Positions 136–373 constitute a Radical SAM core domain; sequence LTPRHYAYLK…MQLQQQISAE (238 aa). In terms of domain architecture, TRAM spans 376 to 441; sequence QEKVGREILV…DEYDLWGSRV (66 aa).

Belongs to the methylthiotransferase family. RimO subfamily. [4Fe-4S] cluster is required as a cofactor.

The protein resides in the cytoplasm. The catalysed reaction is L-aspartate(89)-[ribosomal protein uS12]-hydrogen + (sulfur carrier)-SH + AH2 + 2 S-adenosyl-L-methionine = 3-methylsulfanyl-L-aspartate(89)-[ribosomal protein uS12]-hydrogen + (sulfur carrier)-H + 5'-deoxyadenosine + L-methionine + A + S-adenosyl-L-homocysteine + 2 H(+). Catalyzes the methylthiolation of an aspartic acid residue of ribosomal protein uS12. In Salmonella agona (strain SL483), this protein is Ribosomal protein uS12 methylthiotransferase RimO.